A 653-amino-acid polypeptide reads, in one-letter code: Structural protein ORF653 (653 aa).

Positions 300–330 form a coiled coil; it reads AKEETKQETKQETGKEEEEKKETKQESQEQL. Basic and acidic residues predominate over residues 302-326; that stretch reads EETKQETKQETGKEEEEKKETKQES. Disordered regions lie at residues 302 to 329, 344 to 388, and 626 to 653; these read EETKQETKQETGKEEEEKKETKQESQEQ, GQPA…ENTP, and AGQQEETDETTEEEEEEEEEGNDTVKLS. Residues 371-381 show a composition bias toward low complexity; sequence EENNAEAPQQR. Residues 505 to 649 are a coiled coil; that stretch reads KEQELYKELD…EEEEEEGNDT (145 aa). Residues 630–647 are compositionally biased toward acidic residues; it reads EETDETTEEEEEEEEEGN.

Its subcellular location is the virion. This chain is Structural protein ORF653, found in Acidianus two-tailed virus (ATV).